We begin with the raw amino-acid sequence, 275 residues long: tRNA uridine(34) hydroxylase (275 aa).

A Rhodanese domain is found at 121–214 (SQPDVLVIDT…YLEKTYNKNG (94 aa)). Cysteine 174 functions as the Cysteine persulfide intermediate in the catalytic mechanism.

Belongs to the TrhO family.

It carries out the reaction uridine(34) in tRNA + AH2 + O2 = 5-hydroxyuridine(34) in tRNA + A + H2O. Functionally, catalyzes oxygen-dependent 5-hydroxyuridine (ho5U) modification at position 34 in tRNAs. This Wolbachia pipientis wMel protein is tRNA uridine(34) hydroxylase.